The sequence spans 469 residues: MPRLPLLLLLLWGTGSHGFPAATSETQEQDVETVKKYLENYYNLNSNGKKVERQRNGGLITEKLKQMQKFFGLRVTGKPDAETLNVMKQPRCGVPDVAPFVLTPGKSCWENTNLTYRIENYTPDLSRADVDQAIEKAFQLWSNVTPLTFTKVSEGQADIMISFVRGDHRDNSPFDGPGGNLAHAFQPGAGIGGDAHFDDDEWWTSNFQDYNLYRVAAHEFGHSLGLAHSTDIGALMYPSYTFSGDVQLSQDDIDGIQAIYGPSQNPTQPVGPQTPEVCDSKLTFDAITTIRGEVMFFKDRFYMRTNPLYPEVELNFISVFWPQLPNGLQAAYEVADRDEVRFFKGNKYWAVKGQDVLRGYPRDIYRSFGFPRTVKSIDAAVSEEDTGKTYFFVANKCWRYDEYKQSMDAGYPKMIAEDFPGIGNKVDAVFQKGGFFYFFHGRRQYKFDPQTKRILTLLKANSWFNCRKN.

The signal sequence occupies residues 1–18 (MPRLPLLLLLLWGTGSHG). A propeptide spans 19–99 (FPAATSETQE…PRCGVPDVAP (81 aa)) (activation peptide). Residues 90-97 (PRCGVPDV) carry the Cysteine switch motif. Cysteine 92 is a binding site for Zn(2+). Residue asparagine 120 is glycosylated (N-linked (GlcNAc...) asparagine). Positions 124 and 158 each coordinate Ca(2+). Zn(2+)-binding residues include histidine 168 and aspartate 170. Ca(2+) contacts are provided by aspartate 175, glycine 176, glycine 178, and asparagine 180. Residue histidine 183 participates in Zn(2+) binding. Ca(2+) is bound by residues glycine 190, glycine 192, and aspartate 194. Histidine 196 provides a ligand contact to Zn(2+). Residues aspartate 198, aspartate 199, and glutamate 201 each coordinate Ca(2+). Position 218 (histidine 218) interacts with Zn(2+). Glutamate 219 is an active-site residue. Zn(2+) contacts are provided by histidine 222 and histidine 228. Phosphothreonine is present on threonine 274. Hemopexin repeat units follow at residues 275–324 (PEVC…WPQL), 325–371 (PNGL…FGFP), 374–422 (VKSI…FPGI), and 423–466 (GNKV…WFNC). Cysteine 278 and cysteine 466 form a disulfide bridge. The Ca(2+) site is built by aspartate 285 and glutamine 329. Tyrosine 360 bears the Phosphotyrosine; by PKDCC mark. Residues aspartate 378 and aspartate 427 each coordinate Ca(2+).

It belongs to the peptidase M10A family. The cofactor is Ca(2+). Zn(2+) is required as a cofactor. Tyrosine phosphorylated in platelets by PKDCC/VLK.

The protein localises to the secreted. The protein resides in the extracellular space. It localises to the extracellular matrix. The enzyme catalyses Cleavage of the triple helix of collagen at about three-quarters of the length of the molecule from the N-terminus, at 775-Gly-|-Ile-776 in the alpha1(I) chain. Cleaves synthetic substrates and alpha-macroglobulins at bonds where P1' is a hydrophobic residue.. With respect to regulation, can be activated without removal of the activation peptide. In terms of biological role, cleaves collagens of types I, II, and III at one site in the helical domain. Also cleaves collagens of types VII and X. The sequence is that of Interstitial collagenase (MMP1) from Bos taurus (Bovine).